Reading from the N-terminus, the 98-residue chain is Aspartyl/glutamyl-tRNA(Asn/Gln) amidotransferase subunit C (98 aa).

A disordered region spans residues 77–98; it reads NEAPNPEGDFFRVPQILNTDEE.

This sequence belongs to the GatC family. As to quaternary structure, heterotrimer of A, B and C subunits.

The catalysed reaction is L-glutamyl-tRNA(Gln) + L-glutamine + ATP + H2O = L-glutaminyl-tRNA(Gln) + L-glutamate + ADP + phosphate + H(+). The enzyme catalyses L-aspartyl-tRNA(Asn) + L-glutamine + ATP + H2O = L-asparaginyl-tRNA(Asn) + L-glutamate + ADP + phosphate + 2 H(+). Functionally, allows the formation of correctly charged Asn-tRNA(Asn) or Gln-tRNA(Gln) through the transamidation of misacylated Asp-tRNA(Asn) or Glu-tRNA(Gln) in organisms which lack either or both of asparaginyl-tRNA or glutaminyl-tRNA synthetases. The reaction takes place in the presence of glutamine and ATP through an activated phospho-Asp-tRNA(Asn) or phospho-Glu-tRNA(Gln). This is Aspartyl/glutamyl-tRNA(Asn/Gln) amidotransferase subunit C from Crocosphaera subtropica (strain ATCC 51142 / BH68) (Cyanothece sp. (strain ATCC 51142)).